The primary structure comprises 342 residues: Transcription initiation factor TFIID subunit 12 (342 aa).

The segment at 1-221 (MKMEEFSPPT…QAPPPQMIPA (221 aa)) is disordered. Positions 12 to 35 (PNNHVIVQANPQIAAALSTNSPMQ) are enriched in polar residues. 4 stretches are compositionally biased toward low complexity: residues 39–59 (PPQGHQNPNEQQQQQQFVGQP), 67–89 (PMRMQMPQQQIRQMPYPSPQMRA), 96–146 (QQQQ…HLMG), and 180–192 (QQIMQVQHQQQHQ). Over residues 193–218 (QPPPSQQIQQPPIPQPQQQQAPPPQM) the composition is skewed to pro residues. The region spanning 230–297 (EKSKLDDLMQ…EFILKNVYNM (68 aa)) is the Histone-fold domain.

The protein belongs to the TAF12 family. Interacts (via histone-fold domain) with taf-4 (via the histone-fold domain). Interaction may facilitate the nuclear localization of taf-4.

Its subcellular location is the nucleus. Part of the general transcription factor complex TFIID. Plays a role in recruiting taf-4 to the nucleus and thereby activating transcription initiation by RNA polymerase II, as part of the TFIID complex. The chain is Transcription initiation factor TFIID subunit 12 from Caenorhabditis elegans.